A 390-amino-acid chain; its full sequence is F-box/kelch-repeat protein At4g39753 (390 aa).

The span at 1 to 16 (MVTFWAETAASAATTS) shows a compositional bias: low complexity. Residues 1 to 33 (MVTFWAETAASAATTSKGEPPSKKRKTNPSPPP) form a disordered region. Residues 32-79 (PPSLLSLPDVLILNCLSRIPKSYYPKLSIVSKTFRDLIISIDLNHARF) form the F-box domain. Kelch repeat units follow at residues 139-192 (PLLV…VFDR), 193-243 (KIYV…MIQG), 245-286 (FYVR…WYSC), and 288-321 (PNSFLWFDNEIKNWRLIKGLSSLNHSCRSGLIET).

In Arabidopsis thaliana (Mouse-ear cress), this protein is F-box/kelch-repeat protein At4g39753.